The chain runs to 1384 residues: DNA-directed RNA polymerase subunit beta (1384 aa).

This sequence belongs to the RNA polymerase beta chain family. As to quaternary structure, the RNAP catalytic core consists of 2 alpha, 1 beta, 1 beta' and 1 omega subunit. When a sigma factor is associated with the core the holoenzyme is formed, which can initiate transcription.

The catalysed reaction is RNA(n) + a ribonucleoside 5'-triphosphate = RNA(n+1) + diphosphate. DNA-dependent RNA polymerase catalyzes the transcription of DNA into RNA using the four ribonucleoside triphosphates as substrates. The polypeptide is DNA-directed RNA polymerase subunit beta (Xylella fastidiosa (strain M23)).